The sequence spans 181 residues: ABC transporter E family member 3 (181 aa).

Residues 20–176 form the ABC transporter domain; sequence SQIIVMLGEN…KAAFARFHNG (157 aa). 27 to 34 serves as a coordination point for ATP; sequence GENGTGKT.

This sequence belongs to the ABC transporter superfamily. ABCE family. As to expression, mostly expressed in roots and leaves, and, to a lower extent, in stems, flowers and siliques.

The polypeptide is ABC transporter E family member 3 (ABCE3) (Arabidopsis thaliana (Mouse-ear cress)).